We begin with the raw amino-acid sequence, 39 residues long: Large ribosomal subunit protein bL36 (39 aa).

It belongs to the bacterial ribosomal protein bL36 family.

This Levilactobacillus brevis (strain ATCC 367 / BCRC 12310 / CIP 105137 / JCM 1170 / LMG 11437 / NCIMB 947 / NCTC 947) (Lactobacillus brevis) protein is Large ribosomal subunit protein bL36.